Reading from the N-terminus, the 186-residue chain is Ribosome-recycling factor (186 aa).

This sequence belongs to the RRF family.

It is found in the cytoplasm. Its function is as follows. Responsible for the release of ribosomes from messenger RNA at the termination of protein biosynthesis. May increase the efficiency of translation by recycling ribosomes from one round of translation to another. This chain is Ribosome-recycling factor, found in Limosilactobacillus reuteri (Lactobacillus reuteri).